The primary structure comprises 156 residues: 6,7-dimethyl-8-ribityllumazine synthase (156 aa).

Residues F23, 57–59 (AYE), and 81–83 (AII) each bind 5-amino-6-(D-ribitylamino)uracil. 86–87 (GT) contributes to the (2S)-2-hydroxy-3-oxobutyl phosphate binding site. The Proton donor role is filled by H89. F114 provides a ligand contact to 5-amino-6-(D-ribitylamino)uracil. R128 is a (2S)-2-hydroxy-3-oxobutyl phosphate binding site.

It belongs to the DMRL synthase family.

The enzyme catalyses (2S)-2-hydroxy-3-oxobutyl phosphate + 5-amino-6-(D-ribitylamino)uracil = 6,7-dimethyl-8-(1-D-ribityl)lumazine + phosphate + 2 H2O + H(+). Its pathway is cofactor biosynthesis; riboflavin biosynthesis; riboflavin from 2-hydroxy-3-oxobutyl phosphate and 5-amino-6-(D-ribitylamino)uracil: step 1/2. Catalyzes the formation of 6,7-dimethyl-8-ribityllumazine by condensation of 5-amino-6-(D-ribitylamino)uracil with 3,4-dihydroxy-2-butanone 4-phosphate. This is the penultimate step in the biosynthesis of riboflavin. The polypeptide is 6,7-dimethyl-8-ribityllumazine synthase (Helicobacter pylori (strain P12)).